The primary structure comprises 342 residues: Succinylglutamate desuccinylase (342 aa).

3 residues coordinate Zn(2+): histidine 63, glutamate 66, and histidine 155. Residue glutamate 219 is part of the active site.

It belongs to the AspA/AstE family. Succinylglutamate desuccinylase subfamily. It depends on Zn(2+) as a cofactor.

The catalysed reaction is N-succinyl-L-glutamate + H2O = L-glutamate + succinate. It participates in amino-acid degradation; L-arginine degradation via AST pathway; L-glutamate and succinate from L-arginine: step 5/5. Transforms N(2)-succinylglutamate into succinate and glutamate. This Vibrio campbellii (strain ATCC BAA-1116) protein is Succinylglutamate desuccinylase.